Reading from the N-terminus, the 417-residue chain is Multifunctional CCA protein (417 aa).

ATP-binding residues include glycine 8 and arginine 11. CTP-binding residues include glycine 8 and arginine 11. Positions 21 and 23 each coordinate Mg(2+). Arginine 91, arginine 137, and arginine 140 together coordinate ATP. The CTP site is built by arginine 91, arginine 137, and arginine 140. Residues 225–326 form the HD domain; that stretch reads SGIHTLMTLQ…LNVLKKTDAF (102 aa).

It belongs to the tRNA nucleotidyltransferase/poly(A) polymerase family. Bacterial CCA-adding enzyme type 1 subfamily. As to quaternary structure, monomer. Can also form homodimers and oligomers. Requires Mg(2+) as cofactor. Ni(2+) is required as a cofactor.

The enzyme catalyses a tRNA precursor + 2 CTP + ATP = a tRNA with a 3' CCA end + 3 diphosphate. The catalysed reaction is a tRNA with a 3' CCA end + 2 CTP + ATP = a tRNA with a 3' CCACCA end + 3 diphosphate. Its function is as follows. Catalyzes the addition and repair of the essential 3'-terminal CCA sequence in tRNAs without using a nucleic acid template. Adds these three nucleotides in the order of C, C, and A to the tRNA nucleotide-73, using CTP and ATP as substrates and producing inorganic pyrophosphate. tRNA 3'-terminal CCA addition is required both for tRNA processing and repair. Also involved in tRNA surveillance by mediating tandem CCA addition to generate a CCACCA at the 3' terminus of unstable tRNAs. While stable tRNAs receive only 3'-terminal CCA, unstable tRNAs are marked with CCACCA and rapidly degraded. The protein is Multifunctional CCA protein of Neisseria meningitidis serogroup C / serotype 2a (strain ATCC 700532 / DSM 15464 / FAM18).